Consider the following 91-residue polypeptide: Small ribosomal subunit protein bS16 (91 aa).

The protein belongs to the bacterial ribosomal protein bS16 family.

The sequence is that of Small ribosomal subunit protein bS16 from Levilactobacillus brevis (strain ATCC 367 / BCRC 12310 / CIP 105137 / JCM 1170 / LMG 11437 / NCIMB 947 / NCTC 947) (Lactobacillus brevis).